The chain runs to 174 residues: Cytochrome c-550-like protein (174 aa).

The N-terminal stretch at 1–37 (MPGQTQGAKRWRVPGRGWRWAGILLLVWLGLASPAAG) is a signal peptide. The heme c site is built by C82, C85, H86, and C136.

It belongs to the cytochrome c family. PsbV subfamily. Requires heme c as cofactor.

Its subcellular location is the cellular thylakoid membrane. Possible low-potential cytochrome c. This Synechococcus sp. (strain JA-3-3Ab) (Cyanobacteria bacterium Yellowstone A-Prime) protein is Cytochrome c-550-like protein (psbV2).